A 285-amino-acid chain; its full sequence is GPN-loop GTPase 3 (285 aa).

13–18 (GSGKST) is a GTP binding site. The Gly-Pro-Asn (GPN)-loop; involved in dimer interface motif lies at 72-74 (GPN). 174–177 (TKMD) is a GTP binding site. Residues 262-285 (EPKEVDEEPSNSNFDAFFQDTADS) are disordered.

This sequence belongs to the GPN-loop GTPase family. Heterodimer with gpn1. Binds to RNA polymerase II (RNAPII).

Its function is as follows. Small GTPase required for proper localization of RNA polymerase II (RNAPII). May act at an RNAP assembly step prior to nuclear import. The sequence is that of GPN-loop GTPase 3 from Danio rerio (Zebrafish).